A 252-amino-acid polypeptide reads, in one-letter code: Phosphoglycolate phosphatase (252 aa).

Asp-13 acts as the Nucleophile in catalysis. Mg(2+) contacts are provided by Asp-13, Asp-15, and Asp-192.

This sequence belongs to the HAD-like hydrolase superfamily. CbbY/CbbZ/Gph/YieH family. Monomer. It depends on Mg(2+) as a cofactor. Chloride serves as cofactor.

The catalysed reaction is 2-phosphoglycolate + H2O = glycolate + phosphate. It participates in organic acid metabolism; glycolate biosynthesis; glycolate from 2-phosphoglycolate: step 1/1. Its function is as follows. Specifically catalyzes the dephosphorylation of 2-phosphoglycolate. Is involved in the dissimilation of the intracellular 2-phosphoglycolate formed during the DNA repair of 3'-phosphoglycolate ends, a major class of DNA lesions induced by oxidative stress. The chain is Phosphoglycolate phosphatase from Shigella dysenteriae serotype 1 (strain Sd197).